A 352-amino-acid polypeptide reads, in one-letter code: C-X-C chemokine receptor type 4 (352 aa).

Positions 1 to 21 (MEGISIYTSDNYTEEMGSGDY) are important for chemokine binding and signaling. The Extracellular portion of the chain corresponds to 1–38 (MEGISIYTSDNYTEEMGSGDYDSIKEPCFREKNAHFNR). Sulfotyrosine is present on tyrosine 7. An N-linked (GlcNAc...) asparagine glycan is attached at asparagine 11. Tyrosine 12 is modified (sulfotyrosine). Serine 18 carries an O-linked (Xyl...) (chondroitin sulfate) serine glycan. Sulfotyrosine is present on tyrosine 21. Cystine bridges form between cysteine 28-cysteine 274 and cysteine 109-cysteine 186. A helical transmembrane segment spans residues 39–63 (IFLPTIYSIIFLTGIVGNGLVILVM). At 64–77 (GYQKKLRSMTDKYR) the chain is on the cytoplasmic side. The chain crosses the membrane as a helical span at residues 78–99 (LHLSVADLLFVITLPFWAVDAV). The segment at 94–97 (WAVD) is chemokine binding. Topologically, residues 100 to 110 (ANWYFGNFLCK) are extracellular. The helical transmembrane segment at 111 to 130 (AVHVIYTVNLYSSVLILAFI) threads the bilayer. A chemokine binding region spans residues 113–117 (HVIYT). Residues 131-154 (SLDRYLAIVHATNSQKPRKLLAEK) are Cytoplasmic-facing. The short motif at 133–135 (DRY) is the Important for signaling element. The tract at residues 135 to 147 (YLAIVHATNSQKP) is involved in dimerization; when bound to chemokine. Residues 155 to 174 (VVYVGVWIPALLLTIPGFIF) form a helical membrane-spanning segment. At 175 to 195 (ASVSEADDRFICDRFYPNDLW) the chain is on the extracellular side. Residues 186–190 (CDRFY) form a chemokine binding, important for signaling region. The interval 191–210 (PNDLWVVVFQFQHIMVGLIL) is involved in dimerization. The chain crosses the membrane as a helical span at residues 196 to 216 (VVVFQFQHIMVGLILPGIVIL). The Cytoplasmic segment spans residues 217 to 241 (SCYCIIISKLSHSKGHQKRKALKTT). Residues 242 to 261 (VILILAFFACWLPYYIGISI) form a helical membrane-spanning segment. Residues 262–282 (DSFILLEIIKQGCEFENTVHK) lie on the Extracellular side of the membrane. The segment at 266–268 (LLE) is involved in dimerization. The chain crosses the membrane as a helical span at residues 283–302 (WISITEALAFFHCCLNPILY). The Cytoplasmic segment spans residues 303–352 (AFLGAKFKTSAQHALTSVSRGSSLKILSKGKRGGHSSVSTESESSSFHSS). 2 positions are modified to phosphoserine: serine 319 and serine 321. Residues serine 324 and serine 325 each carry the phosphoserine; by PKC and GRK6 modification. Residues 329 to 352 (LSKGKRGGHSSVSTESESSSFHSS) are disordered. Phosphoserine; by GRK6 is present on serine 330. A Glycyl lysine isopeptide (Lys-Gly) (interchain with G-Cter in ubiquitin) cross-link involves residue lysine 331. Residues 337–352 (HSSVSTESESSSFHSS) are compositionally biased toward low complexity. Serine 339 is subject to Phosphoserine; by GRK6. Residues serine 348 and serine 351 each carry the phosphoserine modification.

This sequence belongs to the G-protein coupled receptor 1 family. As to quaternary structure, monomer. Can form homodimers. Interacts with CD164. Interacts with ARRB2; the interaction is dependent on the C-terminal phosphorylation of CXCR4 and allows activation of MAPK1 and MAPK3. Interacts with ARR3; the interaction is dependent on the C-terminal phosphorylation of CXCR4 and modulates calcium mobilization. Interacts with RNF113A; the interaction, enhanced by CXCL12, promotes CXCR4 ubiquitination and subsequent degradation. Interacts (via the cytoplasmic C-terminal) with ITCH (via the WW domains I and II); the interaction, enhanced by CXCL12, promotes CXCR4 ubiquitination and leads to its degradation. Interacts with extracellular ubiquitin. Interacts with DBN1; this interaction is enhanced by antigenic stimulation. Following LPS binding, may form a complex with GDF5, HSP90AA1 and HSPA8. Phosphorylated on agonist stimulation. Rapidly phosphorylated on serine and threonine residues in the C-terminal. Phosphorylation at Ser-324 and Ser-325 leads to recruitment of ITCH, ubiquitination and protein degradation. Post-translationally, ubiquitinated after ligand binding, leading to its degradation. Ubiquitinated by ITCH at the cell membrane on agonist stimulation. The ubiquitin-dependent mechanism, endosomal sorting complex required for transport (ESCRT), then targets CXCR4 for lysosomal degradation. This process is dependent also on prior Ser-/Thr-phosphorylation in the C-terminal of CXCR4. Also binding of ARRB1 to STAM negatively regulates CXCR4 sorting to lysosomes though modulating ubiquitination of SFR5S. In terms of processing, sulfation is required for efficient binding of CXCL12/SDF-1alpha and promotes its dimerization. O- and N-glycosylated. N-glycosylation can mask coreceptor function. The O-glycosylation chondroitin sulfate attachment does not affect interaction with CXCL12/SDF-1alpha nor its coreceptor activity.

It localises to the cell membrane. It is found in the cell junction. The protein localises to the early endosome. Its subcellular location is the late endosome. The protein resides in the lysosome. Receptor for the C-X-C chemokine CXCL12/SDF-1 that transduces a signal by increasing intracellular calcium ion levels and enhancing MAPK1/MAPK3 activation. Involved in the AKT signaling cascade. Plays a role in regulation of cell migration, e.g. during wound healing. Acts as a receptor for extracellular ubiquitin; leading to enhanced intracellular calcium ions and reduced cellular cAMP levels. Binds bacterial lipopolysaccharide (LPS) et mediates LPS-induced inflammatory response, including TNF secretion by monocytes. Involved in hematopoiesis and in cardiac ventricular septum formation. Also plays an essential role in vascularization of the gastrointestinal tract, probably by regulating vascular branching and/or remodeling processes in endothelial cells. Involved in cerebellar development. In the CNS, could mediate hippocampal-neuron survival. In Cercocebus atys (Sooty mangabey), this protein is C-X-C chemokine receptor type 4 (CXCR4).